Here is a 393-residue protein sequence, read N- to C-terminus: Chorismate synthase (393 aa).

Residues Arg-40 and Arg-46 each coordinate NADP(+). Residues 129-131 (RAS), 250-251 (QA), Gly-301, 316-320 (KPIST), and Arg-342 contribute to the FMN site.

This sequence belongs to the chorismate synthase family. In terms of assembly, homotetramer. The cofactor is FMNH2.

The catalysed reaction is 5-O-(1-carboxyvinyl)-3-phosphoshikimate = chorismate + phosphate. It functions in the pathway metabolic intermediate biosynthesis; chorismate biosynthesis; chorismate from D-erythrose 4-phosphate and phosphoenolpyruvate: step 7/7. Functionally, catalyzes the anti-1,4-elimination of the C-3 phosphate and the C-6 proR hydrogen from 5-enolpyruvylshikimate-3-phosphate (EPSP) to yield chorismate, which is the branch point compound that serves as the starting substrate for the three terminal pathways of aromatic amino acid biosynthesis. This reaction introduces a second double bond into the aromatic ring system. This is Chorismate synthase from Acidobacterium capsulatum (strain ATCC 51196 / DSM 11244 / BCRC 80197 / JCM 7670 / NBRC 15755 / NCIMB 13165 / 161).